Consider the following 87-residue polypeptide: Acyl-CoA-binding protein (87 aa).

Residues 2 to 87 (VSQLFEEKAK…VDQLIAKYSS (86 aa)) enclose the ACB domain. An acyl-CoA contacts are provided by residues 29–33 (YALYK), Lys-51, and Lys-55. A Glycyl lysine isopeptide (Lys-Gly) (interchain with G-Cter in ubiquitin) cross-link involves residue Lys-51. Residue Lys-72 forms a Glycyl lysine isopeptide (Lys-Gly) (interchain with G-Cter in ubiquitin) linkage. Tyr-74 is an an acyl-CoA binding site.

The protein belongs to the ACBP family.

Binds medium- and long-chain acyl-CoA esters with very high affinity and may function as an intracellular carrier of acyl-CoA esters. Enhances the in vitro activity of the ceramide synthase complex. The protein is Acyl-CoA-binding protein (ACB1) of Saccharomyces cerevisiae (strain ATCC 204508 / S288c) (Baker's yeast).